The primary structure comprises 299 residues: Transcription elongation factor A protein 2 (299 aa).

Residues 5–82 (EEIARIARRL…KSWKKLLDVS (78 aa)) form the TFIIS N-terminal domain. A Glycyl lysine isopeptide (Lys-Gly) (interchain with G-Cter in ubiquitin) cross-link involves residue K57. 2 positions are modified to phosphoserine: S59 and S100. The interval 82–127 (SDGKSRNQGRGTPLPTSSSKDASRTTDLSCKKPDPPRTPSTPRITT) is disordered. Polar residues predominate over residues 87 to 101 (RNQGRGTPLPTSSSK). A compositionally biased stretch (basic and acidic residues) spans 102 to 116 (DASRTTDLSCKKPDP). Residues 138-254 (VRNKCREMLT…EHQMARTGGT (117 aa)) form the TFIIS central domain. The TFIIS-type zinc finger occupies 257–297 (DLFTCNKCRKKNCTYTQVQTRSSDEPMTTYVVCNECGNRWK). Positions 261, 264, 289, and 292 each coordinate Zn(2+).

It belongs to the TFS-II family. In terms of assembly, interacts with the basal transcription factor GTF2B. Interacts with REXO1. In terms of tissue distribution, testis and ovary specific. Specific to testicular germ cells.

It localises to the nucleus. Necessary for efficient RNA polymerase II transcription elongation past template-encoded arresting sites. The arresting sites in DNA have the property of trapping a certain fraction of elongating RNA polymerases that pass through, resulting in locked ternary complexes. Cleavage of the nascent transcript by S-II allows the resumption of elongation from the new 3'-terminus. The protein is Transcription elongation factor A protein 2 (Tcea2) of Mus musculus (Mouse).